A 120-amino-acid polypeptide reads, in one-letter code: Large ribosomal subunit protein uL18 (120 aa).

It belongs to the universal ribosomal protein uL18 family. In terms of assembly, part of the 50S ribosomal subunit; part of the 5S rRNA/L5/L18/L25 subcomplex. Contacts the 5S and 23S rRNAs.

Functionally, this is one of the proteins that bind and probably mediate the attachment of the 5S RNA into the large ribosomal subunit, where it forms part of the central protuberance. This chain is Large ribosomal subunit protein uL18, found in Bacillus licheniformis (strain ATCC 14580 / DSM 13 / JCM 2505 / CCUG 7422 / NBRC 12200 / NCIMB 9375 / NCTC 10341 / NRRL NRS-1264 / Gibson 46).